Reading from the N-terminus, the 75-residue chain is UPF0270 protein PFLU_4323 (75 aa).

This sequence belongs to the UPF0270 family.

This is UPF0270 protein PFLU_4323 from Pseudomonas fluorescens (strain SBW25).